Reading from the N-terminus, the 298-residue chain is Probable porphobilinogen deaminase (298 aa).

Cysteine 241 is subject to S-(dipyrrolylmethanemethyl)cysteine.

It belongs to the HMBS family. The cofactor is dipyrromethane.

The enzyme catalyses 4 porphobilinogen + H2O = hydroxymethylbilane + 4 NH4(+). It functions in the pathway porphyrin-containing compound metabolism; protoporphyrin-IX biosynthesis; coproporphyrinogen-III from 5-aminolevulinate: step 2/4. In terms of biological role, tetrapolymerization of the monopyrrole PBG into the hydroxymethylbilane pre-uroporphyrinogen in several discrete steps. This chain is Probable porphobilinogen deaminase, found in Methanopyrus kandleri (strain AV19 / DSM 6324 / JCM 9639 / NBRC 100938).